The chain runs to 250 residues: Hemocyanin, units C and D (250 aa).

Cu cation is bound at residue histidine 1. A unit C region spans residues 1–106 (HGSTKWCPSP…RAWIEPVTSA (106 aa)). Residues cysteine 7 and cysteine 18 are joined by a disulfide bond. A cross-link (2'-(S-cysteinyl)-histidine (Cys-His)) is located at residues 19–21 (CHH). Cu cation-binding residues include histidine 21 and histidine 143. The unit D stretch occupies residues 107 to 250 (VRIRKNLNDL…DAQDVIYNNH (144 aa)). The cysteines at positions 149 and 160 are disulfide-linked. Residues 161-163 (CLH) constitute a cross-link (2'-(S-cysteinyl)-histidine (Cys-His)). Histidine 172 is a Cu cation binding site.

Belongs to the tyrosinase family. Hemocyanin subfamily. In terms of assembly, decamers of large identical subunits (390 kDa), each containing 8 globular oxygen-binding functional units. Cu(2+) serves as cofactor.

Functionally, hemocyanins are copper-containing oxygen carriers occurring freely dissolved in the hemolymph of many mollusks and arthropods. The sequence is that of Hemocyanin, units C and D from Sepia officinalis (Common cuttlefish).